A 437-amino-acid chain; its full sequence is Eukaryotic peptide chain release factor subunit 1 (437 aa).

The NIKS motif; plays an important role in translational termination motif lies at N61–S64.

Belongs to the eukaryotic release factor 1 family. As to quaternary structure, component of the eRF1-eRF3-GTP ternary complex, composed of ETF1/ERF1 and eRF3 (GSPT1/ERF3A or GSPT2/ERF3B) and GTP.

The protein localises to the cytoplasm. Its function is as follows. Component of the eRF1-eRF3-GTP ternary complex, a ternary complex that mediates translation termination in response to the termination codons. The eRF1-eRF3-GTP complex binds to a stop codon in the ribosomal A-site. ETF1/ERF1 is responsible for stop codon recognition and inducing hydrolysis of peptidyl-tRNA. Following GTP hydrolysis, eRF3 (GSPT1/ERF3A or GSPT2/ERF3B) dissociates, permitting ETF1/eRF1 to accommodate fully in the A-site, followed by hydrolysis of peptidyl-tRNA. The chain is Eukaryotic peptide chain release factor subunit 1 (etf1) from Xenopus laevis (African clawed frog).